A 471-amino-acid polypeptide reads, in one-letter code: Steroid C26-monooxygenase (471 aa).

Gly238 is a binding site for substrate. Heme is bound at residue Cys412.

This sequence belongs to the cytochrome P450 family. It depends on heme as a cofactor.

The enzyme catalyses cholest-4-en-3-one + 6 reduced [2Fe-2S]-[ferredoxin] + 3 O2 + 5 H(+) = (25S)-3-oxocholest-4-en-26-oate + 6 oxidized [2Fe-2S]-[ferredoxin] + 4 H2O. Involved in the utilization of cholesterol as the sole carbon and energy source by degrading the side chain. Primarily catalyzes the sequential oxidation of the terminal methyl of cholest-4-en-3-one into (25S)-26-hydroxycholest-4-en-3-one (alcohol), (25S)-26-oxocholest-4-en-3-one (aldehyde), to finally yield the carboxylic acid (25S)-3-oxocholest-4-en-26-oate. Also able to sequentially oxidize cholesterol itself, not only cholest-4-en-3-one. This chain is Steroid C26-monooxygenase (cyp125), found in Rhodococcus jostii (strain RHA1).